The chain runs to 114 residues: Putative membrane protein insertion efficiency factor (114 aa).

It belongs to the UPF0161 family.

It is found in the cell inner membrane. Functionally, could be involved in insertion of integral membrane proteins into the membrane. The chain is Putative membrane protein insertion efficiency factor from Nitrobacter hamburgensis (strain DSM 10229 / NCIMB 13809 / X14).